We begin with the raw amino-acid sequence, 271 residues long: Mannosyl-3-phosphoglycerate phosphatase (271 aa).

Asp-13 serves as the catalytic Nucleophile. 3 residues coordinate Mg(2+): Asp-13, Asp-15, and Asp-214.

Belongs to the HAD-like hydrolase superfamily. MPGP family. Requires Mg(2+) as cofactor.

It localises to the cytoplasm. The enzyme catalyses 2-O-(alpha-D-mannosyl)-3-phosphoglycerate + H2O = (2R)-2-O-(alpha-D-mannosyl)-glycerate + phosphate. The sequence is that of Mannosyl-3-phosphoglycerate phosphatase from Escherichia coli (strain SMS-3-5 / SECEC).